Here is a 548-residue protein sequence, read N- to C-terminus: Non-structural protein NS1 (548 aa).

This sequence belongs to the orbivirus non-structural protein NS1 family.

The protein is Non-structural protein NS1 (Segment-5) of African horse sickness virus (AHSV).